The sequence spans 242 residues: Caffeoyl-CoA O-methyltransferase 2 (242 aa).

Lys16 is a substrate binding site. Residues Thr58, Glu80, 82-83 (GV), Ser88, Asp106, and Ala135 each bind S-adenosyl-L-methionine. Asp158 provides a ligand contact to substrate. Residue Asp158 coordinates a divalent metal cation. An S-adenosyl-L-methionine-binding site is contributed by Asp160. A divalent metal cation contacts are provided by Asp184 and Asn185. Asn189 provides a ligand contact to substrate.

It belongs to the class I-like SAM-binding methyltransferase superfamily. Cation-dependent O-methyltransferase family. CCoAMT subfamily. Requires Mg(2+) as cofactor. As to expression, mostly expressed in the bottom and middle parts of the stems.

The enzyme catalyses (E)-caffeoyl-CoA + S-adenosyl-L-methionine = (E)-feruloyl-CoA + S-adenosyl-L-homocysteine + H(+). It functions in the pathway aromatic compound metabolism; phenylpropanoid biosynthesis. Its function is as follows. Methylates caffeoyl-CoA to feruloyl-CoA and 5-hydroxyferuloyl-CoA to sinapoyl-CoA. Plays a role in the synthesis of feruloylated polysaccharides. Involved in the reinforcement of the plant cell wall. Also involved in the responding to wounding or pathogen challenge by the increased formation of cell wall-bound ferulic acid polymers. Methylates 5-hydroxyferulolyl-CoA more efficiently than caffeoyl-CoA. This chain is Caffeoyl-CoA O-methyltransferase 2 (CCOAOMT2), found in Nicotiana tabacum (Common tobacco).